The following is a 540-amino-acid chain: Cystathionine gamma-synthase 1, chloroplastic (540 aa).

The transit peptide at Met-1–Gln-78 directs the protein to the chloroplast. Pyridoxal 5'-phosphate is bound by residues Tyr-203, Arg-205, Gly-233, Met-234, Tyr-258, Ser-353, and Thr-355. Lys-356 carries the post-translational modification N6-(pyridoxal phosphate)lysine.

This sequence belongs to the trans-sulfuration enzymes family. Forms homotetramers composed of 2 homodimers. Requires pyridoxal 5'-phosphate as cofactor.

The protein resides in the plastid. The protein localises to the chloroplast. It carries out the reaction O-phospho-L-homoserine + L-cysteine = L,L-cystathionine + phosphate. It catalyses the reaction O-succinyl-L-homoserine + L-cysteine = L,L-cystathionine + succinate + H(+). It functions in the pathway amino-acid biosynthesis; L-methionine biosynthesis via de novo pathway; L-cystathionine from O-succinyl-L-homoserine: step 1/1. With respect to regulation, irreversibly inactivated by DL-propargylglycine. Its function is as follows. Catalyzes the first committed step of methionine (Met) biosynthesis. Catalyzes the formation of L-cystathionine from homoserine esters and L-cysteine, via a gamma-replacement reaction. This Nicotiana tabacum (Common tobacco) protein is Cystathionine gamma-synthase 1, chloroplastic.